Here is a 333-residue protein sequence, read N- to C-terminus: Tetraacyldisaccharide 4'-kinase (333 aa).

Residue 55–62 (TAGGNGKT) participates in ATP binding.

This sequence belongs to the LpxK family.

The catalysed reaction is a lipid A disaccharide + ATP = a lipid IVA + ADP + H(+). It participates in glycolipid biosynthesis; lipid IV(A) biosynthesis; lipid IV(A) from (3R)-3-hydroxytetradecanoyl-[acyl-carrier-protein] and UDP-N-acetyl-alpha-D-glucosamine: step 6/6. Transfers the gamma-phosphate of ATP to the 4'-position of a tetraacyldisaccharide 1-phosphate intermediate (termed DS-1-P) to form tetraacyldisaccharide 1,4'-bis-phosphate (lipid IVA). The protein is Tetraacyldisaccharide 4'-kinase of Pectobacterium carotovorum subsp. carotovorum (strain PC1).